Here is a 440-residue protein sequence, read N- to C-terminus: tRNA(Ile)-lysidine synthase (440 aa).

31-36 (SGGADS) provides a ligand contact to ATP.

It belongs to the tRNA(Ile)-lysidine synthase family.

Its subcellular location is the cytoplasm. It catalyses the reaction cytidine(34) in tRNA(Ile2) + L-lysine + ATP = lysidine(34) in tRNA(Ile2) + AMP + diphosphate + H(+). In terms of biological role, ligates lysine onto the cytidine present at position 34 of the AUA codon-specific tRNA(Ile) that contains the anticodon CAU, in an ATP-dependent manner. Cytidine is converted to lysidine, thus changing the amino acid specificity of the tRNA from methionine to isoleucine. This is tRNA(Ile)-lysidine synthase from Borreliella burgdorferi (strain ATCC 35210 / DSM 4680 / CIP 102532 / B31) (Borrelia burgdorferi).